We begin with the raw amino-acid sequence, 196 residues long: Calmodulin-like protein 4 (196 aa).

The segment at 1-43 is disordered; sequence MAAEHLLPGPPPSLADFRLEAGGKGTERGSGSSKPTGSSRGPR. The span at 17 to 27 shows a compositional bias: basic and acidic residues; it reads FRLEAGGKGTE. A compositionally biased stretch (polar residues) spans 29 to 39; it reads GSGSSKPTGSS. 4 consecutive EF-hand domains span residues 51 to 86, 87 to 122, 124 to 159, and 160 to 195; these read DQIN…LGAS, PTPG…QIKQ, DPKK…LGEK, and LTHK…PGRD.

The protein belongs to the calmodulin family. Interacts with MYO7B; the interaction mediates the association of CALML4 with the IMAC/intermicrovillar adhesion complex. Interacts with MYO7A. Expressed in the intestinal tract. As to expression, dominant transcript in the intestinal tract.

The protein localises to the cell projection. It localises to the microvillus. As part of the intermicrovillar adhesion complex/IMAC plays a role in epithelial brush border differentiation, controlling microvilli organization and length. Acts as a light chain for MYO7B and is required for efficient targeting of the IMAC to the tips of border brush microvilli. The chain is Calmodulin-like protein 4 from Homo sapiens (Human).